The following is a 469-amino-acid chain: Probable Xaa-Pro aminopeptidase PEPP (469 aa).

Mn(2+) contacts are provided by Asp-265, Asp-276, Glu-399, and Glu-439.

It belongs to the peptidase M24B family. Mn(2+) is required as a cofactor.

It catalyses the reaction Release of any N-terminal amino acid, including proline, that is linked to proline, even from a dipeptide or tripeptide.. Its function is as follows. Catalyzes the removal of a penultimate prolyl residue from the N-termini of peptides. This is Probable Xaa-Pro aminopeptidase PEPP (PEPP) from Coccidioides posadasii (strain RMSCC 757 / Silveira) (Valley fever fungus).